We begin with the raw amino-acid sequence, 1189 residues long: Lysine-specific demethylase hairless (1189 aa).

Disordered stretches follow at residues 1-40 (MEST…HHGP), 236-257 (HLQR…EMGA), 349-377 (EGGA…SHHT), 414-480 (AGSP…LQDP), and 505-552 (GEGG…RLST). A compositionally biased stretch (basic and acidic residues) spans 239–254 (RAGEAERPSLHQRDGE). Basic and acidic residues predominate over residues 457-469 (KDVDSGQHDEQKG). The short motif at 566–570 (LCRLL) is the LXXLL motif 1 element. The segment at 600 to 625 (CSRCHHGLFNTHWRCPRCSHRLCVAC) adopts a C6-type zinc-finger fold. The tract at residues 702 to 750 (GDAGQQKESTQKTPPTPQPSCNGDTHRTKSIKEETPDSAETPAEDRAGR) is disordered. A compositionally biased stretch (basic and acidic residues) spans 725–736 (DTHRTKSIKEET). Positions 758–762 (LCELL) match the LXXLL motif 2 motif. One can recognise a JmjC domain in the interval 946 to 1157 (DTSRVENLAA…LSAQLCHQGP (212 aa)). Fe cation contacts are provided by cysteine 1007, glutamate 1009, and histidine 1125.

Fe(2+) serves as cofactor. In terms of tissue distribution, strongest expression of isoforms 1 and 2 is seen in the small intestine, weaker expression in brain and colon, and trace expression is found in liver, pancreas, spleen, thymus, stomach, salivary gland, appendix and trachea. Isoform 1 is always the most abundant. Isoform 1 is exclusively expressed at low levels in kidney and testis. Isoform 2 is exclusively expressed at high levels in the skin.

It is found in the nucleus. The catalysed reaction is N(6),N(6)-dimethyl-L-lysyl(9)-[histone H3] + 2 2-oxoglutarate + 2 O2 = L-lysyl(9)-[histone H3] + 2 formaldehyde + 2 succinate + 2 CO2. In terms of biological role, histone demethylase that specifically demethylates both mono- and dimethylated 'Lys-9' of histone H3. May act as a transcription regulator controlling hair biology (via targeting of collagens), neural activity, and cell cycle. In Homo sapiens (Human), this protein is Lysine-specific demethylase hairless (HR).